The following is a 261-amino-acid chain: MEDLAKFLFGVSGNVIALFLFLSPVPTFWRIIRRKSTEDFSGVPYNMTLINCLLSAWYGLPFVSPNNILVSTINGAGAVIETAYVVVFLVFASTHKTRLRTLGLAAAVASVFAAVALVSLLALHGQHRKLLCGVAATVCSICMYASPLSIMRLVIKTKSVEYMPFLLSLAVFLCGTSWFIYGLLGRDPFVTIPNGCGSFLGAVQLVLYAIYRNNKGAGGGSGGKQAGDDDVEMAEGRNNKVADGGAAEDDSTAGGKAGTEV.

The Extracellular portion of the chain corresponds to Met1 to Lys6. The helical transmembrane segment at Phe7–Thr27 threads the bilayer. Residues Phe7 to His95 form the MtN3/slv 1 domain. Topologically, residues Phe28–Gly42 are cytoplasmic. Residues Val43–Val63 traverse the membrane as a helical segment. Residues Ser64–Ser71 are Extracellular-facing. Residues Thr72–Ala92 form a helical membrane-spanning segment. The Cytoplasmic segment spans residues Ser93–Thr101. Residues Leu102 to Ala122 traverse the membrane as a helical segment. The Extracellular segment spans residues Leu123–Lys129. The chain crosses the membrane as a helical span at residues Leu130–Ile150. The region spanning Gly133–Lys215 is the MtN3/slv 2 domain. Residues Met151 to Pro164 lie on the Cytoplasmic side of the membrane. The helical transmembrane segment at Phe165–Gly185 threads the bilayer. Topologically, residues Arg186–Phe189 are extracellular. Residues Val190–Ile210 form a helical membrane-spanning segment. Topologically, residues Tyr211–Val261 are cytoplasmic. Positions Gly218–Val261 are disordered.

Belongs to the SWEET sugar transporter family. In terms of assembly, forms homodimers.

The protein resides in the cell membrane. The catalysed reaction is D-glucose(out) = D-glucose(in). It carries out the reaction D-galactose(in) = D-galactose(out). In terms of biological role, mediates transport of sugars across the plasma membrane. Can transport glucose and galactose, but not fructose, mannose and sucrose. This chain is Bidirectional sugar transporter SWEET1b (SWEET1B), found in Oryza sativa subsp. indica (Rice).